We begin with the raw amino-acid sequence, 189 residues long: Apolipoprotein D (189 aa).

Positions 1-20 (MVTMLMFLATLAGLFTTAKG) are cleaved as a signal peptide. Gln21 is subject to Pyrrolidone carboxylic acid. Disulfide bonds link Cys28–Cys134 and Cys61–Cys185. N-linked (GlcNAc...) asparagine glycosylation is found at Asn65 and Asn98.

Belongs to the calycin superfamily. Lipocalin family. Homodimer. As to expression, highest levels of expression in brain, testis, virgin mammary gland and salivary gland. Moderate levels in skeletal muscle, lactating mammary gland and thymus. Low levels in lung and lymph node. No expression in kidney, pancreas, liver or spleen.

It is found in the secreted. Functionally, APOD occurs in the macromolecular complex with lecithin-transport and binding of bilin. Appears to be able to transport a variety of ligands in a number of different contexts. In Mus musculus (Mouse), this protein is Apolipoprotein D (Apod).